Here is a 637-residue protein sequence, read N- to C-terminus: Phosphomethylpyrimidine synthase (637 aa).

Substrate contacts are provided by residues N242, M271, Y300, H336, S356–G358, D397–R400, and E436. H440 is a Zn(2+) binding site. Y463 is a substrate binding site. A Zn(2+)-binding site is contributed by H504. 3 residues coordinate [4Fe-4S] cluster: C584, C587, and C592.

This sequence belongs to the ThiC family. Homodimer. The cofactor is [4Fe-4S] cluster.

The catalysed reaction is 5-amino-1-(5-phospho-beta-D-ribosyl)imidazole + S-adenosyl-L-methionine = 4-amino-2-methyl-5-(phosphooxymethyl)pyrimidine + CO + 5'-deoxyadenosine + formate + L-methionine + 3 H(+). The protein operates within cofactor biosynthesis; thiamine diphosphate biosynthesis. Functionally, catalyzes the synthesis of the hydroxymethylpyrimidine phosphate (HMP-P) moiety of thiamine from aminoimidazole ribotide (AIR) in a radical S-adenosyl-L-methionine (SAM)-dependent reaction. This is Phosphomethylpyrimidine synthase from Bordetella pertussis (strain Tohama I / ATCC BAA-589 / NCTC 13251).